The sequence spans 53 residues: Large ribosomal subunit protein bL33 (53 aa).

This sequence belongs to the bacterial ribosomal protein bL33 family.

In Malacoplasma penetrans (strain HF-2) (Mycoplasma penetrans), this protein is Large ribosomal subunit protein bL33.